Consider the following 288-residue polypeptide: Syntaxin-1A (288 aa).

Positions 1 to 13 (MKDRTQELRTAKD) are enriched in basic and acidic residues. The disordered stretch occupies residues 1 to 20 (MKDRTQELRTAKDSDDDDDV). Topologically, residues 1–265 (MKDRTQELRT…KYQSKARRKK (265 aa)) are cytoplasmic. A phosphoserine mark is found at S14, S64, and S95. Residues 68 to 109 (DEKTKEELEELMSDIKKTANKVRSKLKSIEQSIEQEEGLNRS) are a coiled coil. S188 carries the post-translational modification Phosphoserine; by DAPK1. Positions 192 to 254 (LSEIETRHSE…ERAVSDTKKA (63 aa)) constitute a t-SNARE coiled-coil homology domain. Glycyl lysine isopeptide (Lys-Gly) (interchain with G-Cter in SUMO) cross-links involve residues K252, K253, and K256. The helical; Anchor for type IV membrane protein transmembrane segment at 266 to 286 (IMIIICCVILGIIIASTIGGI) threads the bilayer. At 287–288 (FG) the chain is on the extracellular side.

The protein belongs to the syntaxin family. Part of the SNARE core complex containing SNAP25, VAMP2 and STX1A; this complex constitutes the basic catalytic machinery of the complex neurotransmitter release apparatus. The SNARE complex interacts with CPLX1. Interacts with STXBP1. The interaction with STXBP1 promotes assembly of the SNARE complex. Interacts (via C-terminus) with KCNB1 (via C-terminus); the interaction increases in a calcium-dependent manner and induces a pore-independent enhancement of exocytosis in neuroendocrine cells, chromaffin cells, pancreatic beta cells and from the soma of dorsal root ganglia (DRG) neurons. Interacts with SYTL4. Interacts with STXBP6. Interacts with PLCL1 (via C2 domain). Interacts with OTOF. Interacts with LGI3. Interacts (via the H3 domain) with SLC6A4 (via the N-terminus); this interaction regulates SLC4A6 channel conductance in thalamocortical neurons. Interacts with SYT6 and SYT8; the interaction is Ca(2+)-dependent. Interacts with VAMP8. Interacts with SNAP23. Interacts with VAPA and SYBU. Interacts with PRRT2. Interacts with SEPT8. Interacts with STXBP5L. Interacts with synaptotagmin-1/SYT1. Interacts with SEPTIN5; in the cerebellar cortex. Interacts with SEPTIN4; in the striatum. Post-translationally, phosphorylated by CK2. Phosphorylation at Ser-188 by DAPK1 significantly decreases its interaction with STXBP1. In terms of processing, phosphorylated by CK2. Phosphorylation at Ser-188 by DAPK1 significantly decreases its interaction with STXBP1. Sumoylated, sumoylation is required for regulation of synaptic vesicle endocytosis. As to expression, expressed in the striatum (at protein level). Expressed in the ileum.

The protein localises to the cytoplasmic vesicle. Its subcellular location is the secretory vesicle. It is found in the synaptic vesicle membrane. The protein resides in the synapse. It localises to the synaptosome. The protein localises to the cell membrane. Functionally, plays an essential role in hormone and neurotransmitter calcium-dependent exocytosis and endocytosis. Part of the SNARE (Soluble NSF Attachment Receptor) complex composed of SNAP25, STX1A and VAMP2 which mediates the fusion of synaptic vesicles with the presynaptic plasma membrane. STX1A and SNAP25 are localized on the plasma membrane while VAMP2 resides in synaptic vesicles. The pairing of the three SNAREs from the N-terminal SNARE motifs to the C-terminal anchors leads to the formation of the SNARE complex, which brings membranes into close proximity and results in final fusion. Participates in the calcium-dependent regulation of acrosomal exocytosis in sperm. Also plays an important role in the exocytosis of hormones such as insulin or glucagon-like peptide 1 (GLP-1). This chain is Syntaxin-1A (Stx1a), found in Mus musculus (Mouse).